A 294-amino-acid chain; its full sequence is 33 kDa chaperonin (294 aa).

2 disulfide bridges follow: cysteine 239/cysteine 241 and cysteine 272/cysteine 275.

It belongs to the HSP33 family. Under oxidizing conditions two disulfide bonds are formed involving the reactive cysteines. Under reducing conditions zinc is bound to the reactive cysteines and the protein is inactive.

The protein resides in the cytoplasm. Its function is as follows. Redox regulated molecular chaperone. Protects both thermally unfolding and oxidatively damaged proteins from irreversible aggregation. Plays an important role in the bacterial defense system toward oxidative stress. In Listeria monocytogenes serotype 4a (strain HCC23), this protein is 33 kDa chaperonin.